Here is a 278-residue protein sequence, read N- to C-terminus: Pantothenate synthetase (278 aa).

Residue 31–38 participates in ATP binding; that stretch reads MGALHEGH. His-38 serves as the catalytic Proton donor. Gln-62 provides a ligand contact to (R)-pantoate. Gln-62 is a binding site for beta-alanine. Residue 148–151 coordinates ATP; that stretch reads GEKD. (R)-pantoate is bound at residue Gln-154. Residues Leu-177 and 185 to 188 contribute to the ATP site; that span reads MSSR.

This sequence belongs to the pantothenate synthetase family. As to quaternary structure, homodimer.

The protein localises to the cytoplasm. The catalysed reaction is (R)-pantoate + beta-alanine + ATP = (R)-pantothenate + AMP + diphosphate + H(+). The protein operates within cofactor biosynthesis; (R)-pantothenate biosynthesis; (R)-pantothenate from (R)-pantoate and beta-alanine: step 1/1. Its function is as follows. Catalyzes the condensation of pantoate with beta-alanine in an ATP-dependent reaction via a pantoyl-adenylate intermediate. The protein is Pantothenate synthetase of Acidiphilium cryptum (strain JF-5).